A 431-amino-acid polypeptide reads, in one-letter code: Anaerobic glycerol-3-phosphate dehydrogenase subunit B (431 aa).

This sequence belongs to the anaerobic G-3-P dehydrogenase subunit B family. As to quaternary structure, composed of a catalytic GlpA/B dimer and of membrane bound GlpC. FMN is required as a cofactor.

It catalyses the reaction a quinone + sn-glycerol 3-phosphate = dihydroxyacetone phosphate + a quinol. Its pathway is polyol metabolism; glycerol degradation via glycerol kinase pathway; glycerone phosphate from sn-glycerol 3-phosphate (anaerobic route): step 1/1. Its function is as follows. Conversion of glycerol 3-phosphate to dihydroxyacetone. Uses fumarate or nitrate as electron acceptor. This is Anaerobic glycerol-3-phosphate dehydrogenase subunit B from Mannheimia succiniciproducens (strain KCTC 0769BP / MBEL55E).